A 296-amino-acid polypeptide reads, in one-letter code: Phosphoribosylaminoimidazole-succinocarboxamide synthase (296 aa).

It belongs to the SAICAR synthetase family.

It catalyses the reaction 5-amino-1-(5-phospho-D-ribosyl)imidazole-4-carboxylate + L-aspartate + ATP = (2S)-2-[5-amino-1-(5-phospho-beta-D-ribosyl)imidazole-4-carboxamido]succinate + ADP + phosphate + 2 H(+). The protein operates within purine metabolism; IMP biosynthesis via de novo pathway; 5-amino-1-(5-phospho-D-ribosyl)imidazole-4-carboxamide from 5-amino-1-(5-phospho-D-ribosyl)imidazole-4-carboxylate: step 1/2. The polypeptide is Phosphoribosylaminoimidazole-succinocarboxamide synthase (Trichlorobacter lovleyi (strain ATCC BAA-1151 / DSM 17278 / SZ) (Geobacter lovleyi)).